We begin with the raw amino-acid sequence, 255 residues long: Type III pantothenate kinase (255 aa).

Residue 6 to 13 (DVGNTNTV) participates in ATP binding. Substrate-binding positions include Tyr100 and 107 to 110 (GADR). Asp109 functions as the Proton acceptor in the catalytic mechanism. K(+) is bound at residue Asp129. Residue Thr132 participates in ATP binding. Thr184 contacts substrate.

It belongs to the type III pantothenate kinase family. As to quaternary structure, homodimer. The cofactor is NH4(+). K(+) serves as cofactor.

The protein resides in the cytoplasm. The enzyme catalyses (R)-pantothenate + ATP = (R)-4'-phosphopantothenate + ADP + H(+). Its pathway is cofactor biosynthesis; coenzyme A biosynthesis; CoA from (R)-pantothenate: step 1/5. Functionally, catalyzes the phosphorylation of pantothenate (Pan), the first step in CoA biosynthesis. This chain is Type III pantothenate kinase, found in Syntrophotalea carbinolica (strain DSM 2380 / NBRC 103641 / GraBd1) (Pelobacter carbinolicus).